The sequence spans 876 residues: Alanine--tRNA ligase (876 aa).

The Zn(2+) site is built by H568, H572, C670, and H674.

The protein belongs to the class-II aminoacyl-tRNA synthetase family. Requires Zn(2+) as cofactor.

It localises to the cytoplasm. The catalysed reaction is tRNA(Ala) + L-alanine + ATP = L-alanyl-tRNA(Ala) + AMP + diphosphate. Catalyzes the attachment of alanine to tRNA(Ala) in a two-step reaction: alanine is first activated by ATP to form Ala-AMP and then transferred to the acceptor end of tRNA(Ala). Also edits incorrectly charged Ser-tRNA(Ala) and Gly-tRNA(Ala) via its editing domain. This Geobacter metallireducens (strain ATCC 53774 / DSM 7210 / GS-15) protein is Alanine--tRNA ligase.